Consider the following 1857-residue polypeptide: Peripheral-type benzodiazepine receptor-associated protein 1 (1857 aa).

3 disordered regions span residues 1 to 103 (MEQL…RPED), 284 to 321 (QRET…QEDA), and 565 to 629 (PKDL…DTAS). Over residues 55-67 (LRSEESSKPKGDG) the composition is skewed to basic and acidic residues. A compositionally biased stretch (polar residues) spans 87–96 (LGQQASSSGP). A compositionally biased stretch (pro residues) spans 289–298 (PLPPSWPPGP). 2 stretches are compositionally biased toward low complexity: residues 299 to 316 (ALQA…GEAT) and 603 to 616 (SLSN…IHNS). The SH3 1 domain occupies 653–720 (ARIQVFLARY…PSNFVERVSD (68 aa)). The interval 729 to 789 (PELADLSHSS…PSPEGLGEPP (61 aa)) is disordered. Positions 755 to 764 (GGQSSVGRSQ) are enriched in low complexity. 3 consecutive Fibronectin type-III domains span residues 791 to 882 (VPYP…ARAG), 884 to 976 (VPSQ…TLPA), and 981 to 1081 (APLD…LAPA). Disordered regions lie at residues 1083 to 1311 (LPAR…SDEE), 1330 to 1479 (FSIP…CSRG), and 1501 to 1601 (YDSE…RGVR). Residues 1098 to 1116 (ARAPLASASPGPGDPSSPL) are compositionally biased toward low complexity. The segment covering 1138–1147 (EMAKGSHEDP) has biased composition (basic and acidic residues). The span at 1201-1218 (ASSSTQGARAQQAPNTEM) shows a compositional bias: polar residues. Positions 1259 to 1274 (DIQEEEEEEEEEEEEE) are enriched in acidic residues. A compositionally biased stretch (polar residues) spans 1278-1292 (RTCSFQKQVAGNSIR). Residues 1333 to 1346 (PEEEEEEEEDEEEE) are compositionally biased toward acidic residues. Basic and acidic residues-rich tracts occupy residues 1420–1429 (RPPDPREHCS) and 1554–1586 (AWEK…EARG). The region spanning 1625-1693 (LPVRIFVALF…PCNMVAEVAV (69 aa)) is the SH3 2 domain. 2 disordered regions span residues 1723-1761 (VYST…VPSA) and 1823-1857 (SNFL…RVQC). In terms of domain architecture, SH3 3 spans 1764 to 1831 (KAPHSMVAAF…PSNFLEGPGP (68 aa)).

This sequence belongs to the RIMBP family. Interacts with RIMS1 and RIMS2. Interacts with TSPO. Interacts with CACNA1A. As to expression, predominantly expressed in brain, pituitary gland and thymus in adults. In adult brain, highest expression found in temporal lobe and the putamen, followed by amygdala, caudate nucleus, cerebral cortex, occipital and frontal lobe. A high expression level is also observed in fetal tissues like brain, heart, kidney and thymus.

Its subcellular location is the cytoplasm. The protein resides in the mitochondrion. Required for synaptic transmission regulation. It probably controls the recruitement of voltage-gated calcium channels to the presynaptic membrane, and modulates neurotransmitter release. In Homo sapiens (Human), this protein is Peripheral-type benzodiazepine receptor-associated protein 1.